A 490-amino-acid chain; its full sequence is Betaine aldehyde dehydrogenase (490 aa).

Asn-93 provides a ligand contact to K(+). 150–152 (GAW) is an NAD(+) binding site. Lys-162 functions as the Charge relay system in the catalytic mechanism. Position 176 to 179 (176 to 179 (KPSE)) interacts with NAD(+). Val-180 lines the K(+) pocket. 230–233 (GTAT) contributes to the NAD(+) binding site. Leu-246 contacts K(+). Glu-252 acts as the Proton acceptor in catalysis. Gly-254, Cys-286, and Glu-387 together coordinate NAD(+). The active-site Nucleophile is Cys-286. Position 286 is a cysteine sulfenic acid (-SOH) (Cys-286). 2 residues coordinate K(+): Lys-457 and Gly-460. Glu-464 serves as the catalytic Charge relay system.

The protein belongs to the aldehyde dehydrogenase family. Dimer of dimers. Requires K(+) as cofactor.

The catalysed reaction is betaine aldehyde + NAD(+) + H2O = glycine betaine + NADH + 2 H(+). Its pathway is amine and polyamine biosynthesis; betaine biosynthesis via choline pathway; betaine from betaine aldehyde: step 1/1. Involved in the biosynthesis of the osmoprotectant glycine betaine. Catalyzes the irreversible oxidation of betaine aldehyde to the corresponding acid. The polypeptide is Betaine aldehyde dehydrogenase (Xanthomonas campestris pv. campestris (strain ATCC 33913 / DSM 3586 / NCPPB 528 / LMG 568 / P 25)).